A 304-amino-acid chain; its full sequence is Oxygen-dependent coproporphyrinogen-III oxidase (304 aa).

Serine 94 serves as a coordination point for substrate. Positions 98 and 108 each coordinate a divalent metal cation. The active-site Proton donor is the histidine 108. 110 to 112 provides a ligand contact to substrate; sequence NVR. A divalent metal cation-binding residues include histidine 147 and histidine 177. The interval 242–277 is important for dimerization; the sequence is YVEFNLVYDRGTLFGLQSGGRTESILMSLPPVAHWR. Residue 260–262 participates in substrate binding; sequence GGR.

The protein belongs to the aerobic coproporphyrinogen-III oxidase family. Homodimer. It depends on a divalent metal cation as a cofactor.

It is found in the cytoplasm. It carries out the reaction coproporphyrinogen III + O2 + 2 H(+) = protoporphyrinogen IX + 2 CO2 + 2 H2O. It functions in the pathway porphyrin-containing compound metabolism; protoporphyrin-IX biosynthesis; protoporphyrinogen-IX from coproporphyrinogen-III (O2 route): step 1/1. Involved in the heme biosynthesis. Catalyzes the aerobic oxidative decarboxylation of propionate groups of rings A and B of coproporphyrinogen-III to yield the vinyl groups in protoporphyrinogen-IX. The chain is Oxygen-dependent coproporphyrinogen-III oxidase from Methylococcus capsulatus (strain ATCC 33009 / NCIMB 11132 / Bath).